The chain runs to 113 residues: Protein translation factor SUI1 homolog (113 aa).

This sequence belongs to the SUI1 family.

Its function is as follows. Probably involved in translation. The sequence is that of Protein translation factor SUI1 homolog from Salix bakko (Japanese willow).